A 418-amino-acid polypeptide reads, in one-letter code: Diacylglycerol O-acyltransferase 1 (418 aa).

The disordered stretch occupies residues 1 to 30 (MSGTFNDIRRRKKEEGSPTAGITERHENKS). The Cytoplasmic portion of the chain corresponds to 1 to 71 (MSGTFNDIRR…LAVAWHTSSF (71 aa)). The residue at position 17 (Ser17) is a Phosphoserine. Residues 72–92 (VLFSIFTLFAISTPALWVLAI) traverse the membrane as a helical segment. Residues 93–186 (PYMIYFFFDR…DYRNQECTGP (94 aa)) lie on the Lumenal side of the membrane. Asn173 carries an N-linked (GlcNAc...) asparagine glycan. A helical membrane pass occupies residues 187–207 (TYLFGYHPHGIGALGAFGAFA). The Cytoplasmic segment spans residues 208–215 (TEGCNYSK). Residues 216 to 236 (IFPGIPISLMTLVTQFHIPLY) traverse the membrane as a helical segment. Residues 237-289 (RDYLLALGISSVSRKNALRTLSKNQSICIVVGGARESLLSSTNGTQLILNKRK) are Lumenal-facing. Residues Asn260 and Asn279 are each glycosylated (N-linked (GlcNAc...) asparagine). Residues 290–310 (GFIKLAIQTGNINLVPVFAFG) traverse the membrane as a helical segment. The Cytoplasmic portion of the chain corresponds to 311-418 (EVDCYNVLST…VPDAELKIVG (108 aa)).

This sequence belongs to the diacylglycerol acyltransferase family.

The protein resides in the lipid droplet. It is found in the endoplasmic reticulum membrane. The enzyme catalyses an acyl-CoA + a 1,2-diacyl-sn-glycerol = a triacyl-sn-glycerol + CoA. It carries out the reaction a 2-acylglycerol + an acyl-CoA = a 1,2-diacylglycerol + CoA. It catalyses the reaction 2-(9Z-octadecenoyl)-glycerol + (9Z)-octadecenoyl-CoA = 1,2-di-(9Z-octadecenoyl)-glycerol + CoA. It participates in glycerolipid metabolism; triacylglycerol biosynthesis. In terms of biological role, catalyzes the terminal and only committed step in triacylglycerol (TAG) synthesis by using diacylglycerol (DAG) and fatty acyl-CoA as substrates. Required for storage lipid synthesis. Major DAG esterifying enzyme in stationary phase when TAG production is particularly active. Involved in lipid particle synthesis from the endoplasmic reticulum, promoting localized TAG production at discrete ER subdomains, and in ergosterol biosynthesis. Also has monoacylglycerol acyltransferase (MGAT) activity, catalyzing the acyl-CoA-dependent esterification of monoacylglycerol to diacylglycerol. Can also utilize ceramide instead of DAG, acylating the ceramides by attaching a fatty acid to the hydroxy group on the first carbon atom of the long-chain base to produce 1-O-acylceramides. This is Diacylglycerol O-acyltransferase 1 (DGA1) from Saccharomyces cerevisiae (strain ATCC 204508 / S288c) (Baker's yeast).